Reading from the N-terminus, the 61-residue chain is Photosystem II reaction center protein K (61 aa).

Residues 1–24 (MLNIFSLICICLNSALHSSSFFFA) constitute a propeptide that is removed on maturation. A helical transmembrane segment spans residues 32-52 (FFNPIVDFMPVIPVLFFLLAL).

It belongs to the PsbK family. In terms of assembly, PSII is composed of 1 copy each of membrane proteins PsbA, PsbB, PsbC, PsbD, PsbE, PsbF, PsbH, PsbI, PsbJ, PsbK, PsbL, PsbM, PsbT, PsbX, PsbY, PsbZ, Psb30/Ycf12, at least 3 peripheral proteins of the oxygen-evolving complex and a large number of cofactors. It forms dimeric complexes.

It localises to the plastid. The protein localises to the chloroplast thylakoid membrane. In terms of biological role, one of the components of the core complex of photosystem II (PSII). PSII is a light-driven water:plastoquinone oxidoreductase that uses light energy to abstract electrons from H(2)O, generating O(2) and a proton gradient subsequently used for ATP formation. It consists of a core antenna complex that captures photons, and an electron transfer chain that converts photonic excitation into a charge separation. This is Photosystem II reaction center protein K from Drimys granadensis.